The chain runs to 492 residues: N-succinylglutamate 5-semialdehyde dehydrogenase (492 aa).

Residue 220 to 225 (GRANTG) coordinates NAD(+). Catalysis depends on residues E243 and C277.

This sequence belongs to the aldehyde dehydrogenase family. AstD subfamily.

It carries out the reaction N-succinyl-L-glutamate 5-semialdehyde + NAD(+) + H2O = N-succinyl-L-glutamate + NADH + 2 H(+). It functions in the pathway amino-acid degradation; L-arginine degradation via AST pathway; L-glutamate and succinate from L-arginine: step 4/5. Its function is as follows. Catalyzes the NAD-dependent reduction of succinylglutamate semialdehyde into succinylglutamate. This is N-succinylglutamate 5-semialdehyde dehydrogenase from Shigella boydii serotype 4 (strain Sb227).